A 386-amino-acid chain; its full sequence is Acetylornithine aminotransferase (386 aa).

Pyridoxal 5'-phosphate-binding positions include 94 to 95 and Phe-121; that span reads GT. A N(2)-acetyl-L-ornithine-binding site is contributed by Arg-124. Position 206-209 (206-209) interacts with pyridoxal 5'-phosphate; sequence DEVQ. N6-(pyridoxal phosphate)lysine is present on Lys-235. Ser-263 contacts N(2)-acetyl-L-ornithine. Pyridoxal 5'-phosphate is bound at residue Thr-264.

It belongs to the class-III pyridoxal-phosphate-dependent aminotransferase family. ArgD subfamily. In terms of assembly, homodimer. Pyridoxal 5'-phosphate is required as a cofactor.

Its subcellular location is the cytoplasm. It carries out the reaction N(2)-acetyl-L-ornithine + 2-oxoglutarate = N-acetyl-L-glutamate 5-semialdehyde + L-glutamate. It participates in amino-acid biosynthesis; L-arginine biosynthesis; N(2)-acetyl-L-ornithine from L-glutamate: step 4/4. The protein is Acetylornithine aminotransferase of Listeria monocytogenes serovar 1/2a (strain ATCC BAA-679 / EGD-e).